Reading from the N-terminus, the 200-residue chain is Ephrin-A2 (200 aa).

The first 22 residues, 1-22 (MPRWEAAALLAAIVGVCVWSDD), serve as a signal peptide directing secretion. The 134-residue stretch at 28-161 (SDRYAVYWNR…KLKVYVRPTN (134 aa)) folds into the Ephrin RBD domain. Asn36 is a glycosylation site (N-linked (GlcNAc...) asparagine). Disulfide bonds link Cys61-Cys101 and Cys89-Cys150. Residues Asn161 and Asn175 are each glycosylated (N-linked (GlcNAc...) asparagine). The GPI-anchor amidated asparagine moiety is linked to residue Asn175. The propeptide at 176 to 200 (NSCCSLAVPRAVLVAAPVFWTLLGS) is removed in mature form.

This sequence belongs to the ephrin family. As to quaternary structure, binds to the receptor tyrosine kinases EPHA3, EPHA4 and EPHA5. Interacts with EPHA8; activates EPHA8. In terms of tissue distribution, expressed in a gradient across the tectum being more strongly expressed at the posterior pole.

Its subcellular location is the cell membrane. In terms of biological role, cell surface GPI-bound ligand for Eph receptors, a family of receptor tyrosine kinases which are crucial for migration, repulsion and adhesion during neuronal, vascular and epithelial development. Binds promiscuously Eph receptors residing on adjacent cells, leading to contact-dependent bidirectional signaling into neighboring cells. The signaling pathway downstream of the receptor is referred to as forward signaling while the signaling pathway downstream of the ephrin ligand is referred to as reverse signaling. With the EPHA2 receptor may play a role in bone remodeling through regulation of osteoclastogenesis and osteoblastogenesis. This is Ephrin-A2 (EFNA2) from Gallus gallus (Chicken).